The chain runs to 238 residues: Urease accessory protein UreF (238 aa).

The protein belongs to the UreF family. In terms of assembly, ureD, UreF and UreG form a complex that acts as a GTP-hydrolysis-dependent molecular chaperone, activating the urease apoprotein by helping to assemble the nickel containing metallocenter of UreC. The UreE protein probably delivers the nickel.

The protein resides in the cytoplasm. Required for maturation of urease via the functional incorporation of the urease nickel metallocenter. In Delftia acidovorans (strain DSM 14801 / SPH-1), this protein is Urease accessory protein UreF.